The following is a 142-amino-acid chain: Bacilliredoxin ABC2448 (142 aa).

This sequence belongs to the bacilliredoxin family.

This chain is Bacilliredoxin ABC2448, found in Shouchella clausii (strain KSM-K16) (Alkalihalobacillus clausii).